Reading from the N-terminus, the 705-residue chain is Ribosomal RNA large subunit methyltransferase K/L (705 aa).

Positions valine 43–leucine 154 constitute a THUMP domain.

The protein belongs to the methyltransferase superfamily. RlmKL family.

Its subcellular location is the cytoplasm. It carries out the reaction guanosine(2445) in 23S rRNA + S-adenosyl-L-methionine = N(2)-methylguanosine(2445) in 23S rRNA + S-adenosyl-L-homocysteine + H(+). It catalyses the reaction guanosine(2069) in 23S rRNA + S-adenosyl-L-methionine = N(2)-methylguanosine(2069) in 23S rRNA + S-adenosyl-L-homocysteine + H(+). Functionally, specifically methylates the guanine in position 2445 (m2G2445) and the guanine in position 2069 (m7G2069) of 23S rRNA. The polypeptide is Ribosomal RNA large subunit methyltransferase K/L (Aliivibrio fischeri (strain ATCC 700601 / ES114) (Vibrio fischeri)).